We begin with the raw amino-acid sequence, 397 residues long: Argininosuccinate synthase (397 aa).

9 to 17 contributes to the ATP binding site; that stretch reads AYSGGLDTS. Y85 is an L-citrulline binding site. ATP is bound at residue G115. Positions 117, 121, and 122 each coordinate L-aspartate. L-citrulline is bound at residue N121. Residues R125, S173, E258, and Y270 each contribute to the L-citrulline site.

The protein belongs to the argininosuccinate synthase family. Type 1 subfamily. Homotetramer.

The protein resides in the cytoplasm. The enzyme catalyses L-citrulline + L-aspartate + ATP = 2-(N(omega)-L-arginino)succinate + AMP + diphosphate + H(+). Its pathway is amino-acid biosynthesis; L-arginine biosynthesis; L-arginine from L-ornithine and carbamoyl phosphate: step 2/3. The chain is Argininosuccinate synthase from Streptococcus suis (strain 05ZYH33).